A 253-amino-acid polypeptide reads, in one-letter code: Ribosomal RNA small subunit methyltransferase G (253 aa).

S-adenosyl-L-methionine is bound by residues Gly84, Leu89, 136 to 137 (IE), and Arg155.

The protein belongs to the methyltransferase superfamily. RNA methyltransferase RsmG family.

The protein localises to the cytoplasm. Specifically methylates the N7 position of a guanine in 16S rRNA. In Prochlorococcus marinus (strain SARG / CCMP1375 / SS120), this protein is Ribosomal RNA small subunit methyltransferase G.